A 439-amino-acid polypeptide reads, in one-letter code: Arginine biosynthesis bifunctional protein ArgJ, mitochondrial (439 aa).

Substrate is bound by residues T175, K201, T212, E301, N434, and S439. The active-site Nucleophile is the T212.

It belongs to the ArgJ family. As to quaternary structure, heterodimer of an alpha and a beta chain. The alpha and beta chains are autoproteolytically processed from a single precursor protein within the mitochondrion.

Its subcellular location is the mitochondrion matrix. It carries out the reaction N(2)-acetyl-L-ornithine + L-glutamate = N-acetyl-L-glutamate + L-ornithine. The catalysed reaction is L-glutamate + acetyl-CoA = N-acetyl-L-glutamate + CoA + H(+). The protein operates within amino-acid biosynthesis; L-arginine biosynthesis; L-ornithine and N-acetyl-L-glutamate from L-glutamate and N(2)-acetyl-L-ornithine (cyclic): step 1/1. It participates in amino-acid biosynthesis; L-arginine biosynthesis; N(2)-acetyl-L-ornithine from L-glutamate: step 1/4. In terms of biological role, catalyzes two activities which are involved in the cyclic version of arginine biosynthesis: the synthesis of acetylglutamate from glutamate and acetyl-CoA, and of ornithine by transacetylation between acetylornithine and glutamate. In Candida albicans (strain WO-1) (Yeast), this protein is Arginine biosynthesis bifunctional protein ArgJ, mitochondrial.